We begin with the raw amino-acid sequence, 314 residues long: RNA 2',3'-cyclic phosphodiesterase (314 aa).

H43 acts as the Proton donor in catalysis. 2 short sequence motifs (HXTX) span residues 43-46 (HITL) and 129-132 (HITI). The active-site Proton acceptor is H129.

The protein belongs to the 2H phosphoesterase superfamily. ThpR family.

The enzyme catalyses a 3'-end 2',3'-cyclophospho-ribonucleotide-RNA + H2O = a 3'-end 2'-phospho-ribonucleotide-RNA + H(+). Hydrolyzes RNA 2',3'-cyclic phosphodiester to an RNA 2'-phosphomonoester. This chain is RNA 2',3'-cyclic phosphodiesterase, found in Geobacillus stearothermophilus (Bacillus stearothermophilus).